The following is a 228-amino-acid chain: 5'-methylthioadenosine/S-adenosylhomocysteine nucleosidase (228 aa).

Glu11 serves as the catalytic Proton acceptor. Residues Gly77, Ile151, and 172-173 contribute to the substrate site; that span reads ME. Catalysis depends on Asp196, which acts as the Proton donor.

The protein belongs to the PNP/UDP phosphorylase family. MtnN subfamily.

The catalysed reaction is S-adenosyl-L-homocysteine + H2O = S-(5-deoxy-D-ribos-5-yl)-L-homocysteine + adenine. It carries out the reaction S-methyl-5'-thioadenosine + H2O = 5-(methylsulfanyl)-D-ribose + adenine. It catalyses the reaction 5'-deoxyadenosine + H2O = 5-deoxy-D-ribose + adenine. The protein operates within amino-acid biosynthesis; L-methionine biosynthesis via salvage pathway; S-methyl-5-thio-alpha-D-ribose 1-phosphate from S-methyl-5'-thioadenosine (hydrolase route): step 1/2. In terms of biological role, catalyzes the irreversible cleavage of the glycosidic bond in both 5'-methylthioadenosine (MTA) and S-adenosylhomocysteine (SAH/AdoHcy) to adenine and the corresponding thioribose, 5'-methylthioribose and S-ribosylhomocysteine, respectively. Also cleaves 5'-deoxyadenosine, a toxic by-product of radical S-adenosylmethionine (SAM) enzymes, into 5-deoxyribose and adenine. In Staphylococcus haemolyticus (strain JCSC1435), this protein is 5'-methylthioadenosine/S-adenosylhomocysteine nucleosidase.